A 490-amino-acid chain; its full sequence is MSRMAEQQLYIHGGYTSATSGRTFETINPANGNVLATVQAAGREDVDRAVKSAQQGQKIWAAMTAMERSRILRRAVDILRERNDELAKLETLDTGKAYSETSTVDIVTGADVLEYYAGLIPALEGSQIPLRETLFVYTRREPLGVVAGIGAWNYPIQIALWKSAPALAAGNAMIFKPSEVTPLTALKLAEIYSEAGLPDGVFNVLPGVGAETGQYLTEHPGIAKVSFTGGVASGKKVMANSAASSLKEVTMELGGKSPLIVFDDADLDLAADIAMMANFFSSGQVCTNGTRVFVPAKCKAAFEQKILARVERIRAGDVFDPQTNFGPLVSFPHRDNVLRYIAKGKEEGARVLCGGDVLKGDGFDNGAWVAPTVFTDCRDEMTIVREEIFGPVMSLLTYESEDEVIRRANDTDYGLAAGIVTADLNRAHRVIHQLEAGICWINTWGESPAEMPVGGYKHSGIGRENGVMTLQSYTQVKSIQVEMAKFQSIF.

3 residues coordinate K(+): threonine 26, isoleucine 27, and aspartate 93. 150-152 (GAW) contacts NAD(+). The Charge relay system role is filled by lysine 162. 176-179 (KPSE) provides a ligand contact to NAD(+). Valine 180 contacts K(+). 230–233 (GVAS) lines the NAD(+) pocket. Residue leucine 246 coordinates K(+). Glutamate 252 acts as the Proton acceptor in catalysis. Residues glycine 254, cysteine 286, and glutamate 387 each coordinate NAD(+). Catalysis depends on cysteine 286, which acts as the Nucleophile. Position 286 is a cysteine sulfenic acid (-SOH) (cysteine 286). 2 residues coordinate K(+): lysine 457 and glycine 460. Catalysis depends on glutamate 464, which acts as the Charge relay system.

The protein belongs to the aldehyde dehydrogenase family. Dimer of dimers. K(+) is required as a cofactor.

It carries out the reaction betaine aldehyde + NAD(+) + H2O = glycine betaine + NADH + 2 H(+). It functions in the pathway amine and polyamine biosynthesis; betaine biosynthesis via choline pathway; betaine from betaine aldehyde: step 1/1. In terms of biological role, involved in the biosynthesis of the osmoprotectant glycine betaine. Catalyzes the irreversible oxidation of betaine aldehyde to the corresponding acid. This is Betaine aldehyde dehydrogenase from Escherichia coli (strain SE11).